The sequence spans 413 residues: MVYLQKQDKEVFDAIKLELGRQRANIELIASENFVSEQVMEAMGSVLTNKYAEGYPGKRYYGGCEFVDIVEDLARDRAKKLFGAEYANVQPHSGAQANMAVYHTVLEPGDTVLGMNLSHGGHLTHGSPVNFSGVLYNFVEYGVREDTKEIDYDIVREAALKHKPKMIVAGASAYPRKIDFAKFREIADEVGAYLMVDMAHIAGLVAAGLHQNPVPYADFTTTTTHKTLRGPRGGMILAKAEWEQKLNKSIFPGIQGGPLMHVIAAKAVAFGEALQPEFTAYCEQIIRNSKKLAETLQANDVAVLTGGSDNHLLLIDLKPLGLTGKAAEKVLDEVGITVNKNTIPFETESPFVTSGIRVGVAAVTTRGFDEVAIEKVGVLISEVLHNLENEEVLADVKARVATLTNEYPLYPSL.

(6S)-5,6,7,8-tetrahydrofolate is bound by residues Leu-117 and 121–123 (GHL). Lys-226 carries the post-translational modification N6-(pyridoxal phosphate)lysine. Residue 349 to 351 (SPF) coordinates (6S)-5,6,7,8-tetrahydrofolate.

Belongs to the SHMT family. In terms of assembly, homodimer. Pyridoxal 5'-phosphate serves as cofactor.

It localises to the cytoplasm. The catalysed reaction is (6R)-5,10-methylene-5,6,7,8-tetrahydrofolate + glycine + H2O = (6S)-5,6,7,8-tetrahydrofolate + L-serine. It functions in the pathway one-carbon metabolism; tetrahydrofolate interconversion. It participates in amino-acid biosynthesis; glycine biosynthesis; glycine from L-serine: step 1/1. Functionally, catalyzes the reversible interconversion of serine and glycine with tetrahydrofolate (THF) serving as the one-carbon carrier. This reaction serves as the major source of one-carbon groups required for the biosynthesis of purines, thymidylate, methionine, and other important biomolecules. Also exhibits THF-independent aldolase activity toward beta-hydroxyamino acids, producing glycine and aldehydes, via a retro-aldol mechanism. This Listeria monocytogenes serotype 4b (strain F2365) protein is Serine hydroxymethyltransferase.